A 670-amino-acid polypeptide reads, in one-letter code: Amyloid beta A4 precursor protein-binding family B member 1-interacting protein (670 aa).

S55 is subject to Phosphoserine. One can recognise a Ras-associating domain in the interval 179-266 (KKLVVKVHMD…KVLFLEKEER (88 aa)). Positions 313–422 (VPELEGALYL…WVMGIRIAKY (110 aa)) constitute a PH domain. The disordered stretch occupies residues 449–653 (VGTPMPAQPS…PGAPGNSEQD (205 aa)). The span at 456-475 (QPSTVSSGLKTGTSQPNGQM) shows a compositional bias: polar residues. S532 carries the post-translational modification Phosphoserine. At T534 the chain carries Phosphothreonine. S537 bears the Phosphoserine mark. 4 stretches are compositionally biased toward pro residues: residues 553 to 567 (PHPP…PPPP), 576 to 599 (LPPP…PPPA), 606 to 615 (LPPPPPPPPC), and 625 to 634 (PLPPKKPLVP).

This sequence belongs to the MRL family. Interacts, through the N-terminal Pro-rich region, with the WW domain of APBB1. Interacts with RAP1A, PFN1, VASP and ENAH. In terms of tissue distribution, ubiquitously expressed with high expression in the hematopoietic system.

The protein resides in the cell membrane. Its subcellular location is the cell projection. It is found in the lamellipodium. The protein localises to the cell junction. It localises to the focal adhesion. The protein resides in the cytoplasm. Its subcellular location is the cytoskeleton. Appears to function in the signal transduction from Ras activation to actin cytoskeletal remodeling. Suppresses insulin-induced promoter activities through AP1 and SRE. Mediates Rap1-induced adhesion. The polypeptide is Amyloid beta A4 precursor protein-binding family B member 1-interacting protein (Apbb1ip) (Mus musculus (Mouse)).